A 447-amino-acid chain; its full sequence is Probable 3-deoxy-D-manno-octulosonic acid transferase, mitochondrial (447 aa).

The transit peptide at 1 to 32 (MKLGVFVYRLYRALTYGVSPLIHLHIRWRRLR) directs the protein to the mitochondrion. Glu-66 acts as the Proton acceptor in catalysis. CMP contacts are provided by residues 278–279 (PR), 320–322 (LGE), and 347–350 (NLSE).

It belongs to the glycosyltransferase group 1 family. Glycosyltransferase 30 subfamily. As to expression, expressed in leaves, stems and flowers.

It localises to the mitochondrion. The catalysed reaction is lipid IVA (E. coli) + CMP-3-deoxy-beta-D-manno-octulosonate = alpha-Kdo-(2-&gt;6)-lipid IVA (E. coli) + CMP + H(+). The enzyme catalyses alpha-Kdo-(2-&gt;6)-lipid IVA (E. coli) + CMP-3-deoxy-beta-D-manno-octulosonate = alpha-Kdo-(2-&gt;4)-alpha-Kdo-(2-&gt;6)-lipid IVA (E. coli) + CMP + H(+). It participates in glycolipid biosynthesis; KDO(2)-lipid A biosynthesis; KDO(2)-lipid A from CMP-3-deoxy-D-manno-octulosonate and lipid IV(A): step 1/4. The protein operates within glycolipid biosynthesis; KDO(2)-lipid A biosynthesis; KDO(2)-lipid A from CMP-3-deoxy-D-manno-octulosonate and lipid IV(A): step 2/4. Its function is as follows. Involved in the biosynthesis of lipid A, a phosphorylated glycolipid that in bacteria anchors the lipopolysaccharide to the outer membrane of the cell. Catalyzes the transfer of two 3-deoxy-D-manno-octulosonate (Kdo) residues from CMP-Kdo to lipid IV(A), the tetraacyldisaccharide-1,4'-bisphosphate precursor of lipid A. Lipid A-like molecules in plants may serve as structural components of the outer membranes of mitochondria and/or chloroplasts, or may be involved in signal transduction or plant defense responses. This chain is Probable 3-deoxy-D-manno-octulosonic acid transferase, mitochondrial (KDTA), found in Arabidopsis thaliana (Mouse-ear cress).